The primary structure comprises 105 residues: Met repressor (105 aa).

This sequence belongs to the MetJ family. Homodimer.

The protein localises to the cytoplasm. This regulatory protein, when combined with SAM (S-adenosylmethionine) represses the expression of the methionine regulon and of enzymes involved in SAM synthesis. The chain is Met repressor from Proteus mirabilis (strain HI4320).